The following is a 607-amino-acid chain: Chaperone protein DnaK (607 aa).

T174 carries the phosphothreonine; by autocatalysis modification. The tract at residues G577–Y607 is disordered. The span at P583–G595 shows a compositional bias: gly residues.

It belongs to the heat shock protein 70 family.

Acts as a chaperone. The protein is Chaperone protein DnaK of Caldicellulosiruptor bescii (strain ATCC BAA-1888 / DSM 6725 / KCTC 15123 / Z-1320) (Anaerocellum thermophilum).